The chain runs to 1502 residues: Ras guanine nucleotide exchange factor P (1502 aa).

The Calponin-homology (CH) domain occupies 84–187 (FIIDNQVLDW…LLYSLMKFSE (104 aa)). 4 disordered regions span residues 216 to 242 (AQSSSSSPTTSTSASTSTSTSPSSSNE), 325 to 436 (QQQQ…PNNN), 456 to 534 (EDNT…VGRG), and 589 to 935 (TTTA…NQNN). Low complexity-rich tracts occupy residues 218–242 (SSSSSPTTSTSASTSTSTSPSSSNE), 325–345 (QQQQPPPQTSTCTTTQPTTTT), 371–400 (TTSSIIKKAAPAPLKKPSPANTSSNSLLNH), and 407–421 (SSSTASSAINTPIST). A coiled-coil region spans residues 287–328 (QQQQQQQQQQQQQQQQQQQQQQQQQQQQQQQQQQQQQQQQQQ). A compositionally biased stretch (polar residues) spans 422-436 (PSTSKSNSFQKPNNN). Residues 451–515 (EENEIEDNTN…NQNENEDEVK (65 aa)) adopt a coiled-coil conformation. A compositionally biased stretch (low complexity) spans 458 to 508 (NTNNNNNNNNNNNNNNNNNNNNNNNNNNNNNNNNTNDNINNNNKNNNNNQN). The span at 518–528 (HSPPKVRPPLP) shows a compositional bias: pro residues. 5 stretches are compositionally biased toward low complexity: residues 589 to 646 (TTTA…NNNN), 663 to 675 (TISTSSPSTTGTI), 686 to 719 (SQPLNNNNNINNENNNSNNSNSLVTSSSPPLSLP), 764 to 790 (NSINQPPSNSSPKQSPVPNNPPSVSQS), and 813 to 853 (NSNS…NNNN). The span at 861 to 876 (LTMSNQSANSLKSSGN) shows a compositional bias: polar residues. Positions 883 to 935 (TNGNNNISQNQNQNQNQNQNQTQNQNQNQNQNHISHSNSISSGNLNNHVNQNN) are enriched in low complexity. Residues 1032–1076 (VEENKNLITRTEEMQKMIDSLMKEKKELINEKNTLASMLAKTKQQ) adopt a coiled-coil conformation. The N-terminal Ras-GEF domain occupies 1102–1249 (GKYEIKGGTT…SELKLVFSTP (148 aa)). One can recognise a Ras-GEF domain in the interval 1267–1498 (DPAEIARQLT…FNLSLICEPR (232 aa)).

Functionally, promotes the exchange of Ras-bound GDP by GTP. This Dictyostelium discoideum (Social amoeba) protein is Ras guanine nucleotide exchange factor P (gefP).